The following is a 143-amino-acid chain: Deoxyuridine 5'-triphosphate nucleotidohydrolase (143 aa).

Substrate-binding positions include Arg62–Gly64, Asn75, and Thr79–Asp81.

Belongs to the dUTPase family. Mg(2+) serves as cofactor.

The enzyme catalyses dUTP + H2O = dUMP + diphosphate + H(+). It functions in the pathway pyrimidine metabolism; dUMP biosynthesis; dUMP from dCTP (dUTP route): step 2/2. In terms of biological role, this enzyme is involved in nucleotide metabolism: it produces dUMP, the immediate precursor of thymidine nucleotides and it decreases the intracellular concentration of dUTP so that uracil cannot be incorporated into DNA. This is Deoxyuridine 5'-triphosphate nucleotidohydrolase from Acaryochloris marina (strain MBIC 11017).